The sequence spans 363 residues: Peptide chain release factor 1 (363 aa).

Gln237 carries the post-translational modification N5-methylglutamine. Over residues 284–297 the composition is skewed to basic and acidic residues; that stretch reads ERAKQQSERSEQRR. The disordered stretch occupies residues 284-306; sequence ERAKQQSERSEQRRLAVGSGDRS.

Belongs to the prokaryotic/mitochondrial release factor family. Methylated by PrmC. Methylation increases the termination efficiency of RF1.

The protein localises to the cytoplasm. Its function is as follows. Peptide chain release factor 1 directs the termination of translation in response to the peptide chain termination codons UAG and UAA. The chain is Peptide chain release factor 1 from Halorhodospira halophila (strain DSM 244 / SL1) (Ectothiorhodospira halophila (strain DSM 244 / SL1)).